Reading from the N-terminus, the 165-residue chain is Protein SprT (165 aa).

Residues 10 to 157 enclose the SprT-like domain; the sequence is EACYRQAEDF…YCRRCKATLV (148 aa). His69 contacts Zn(2+). The active site involves Glu70. A Zn(2+)-binding site is contributed by His73.

Belongs to the SprT family. Zn(2+) is required as a cofactor.

It localises to the cytoplasm. This chain is Protein SprT, found in Pseudomonas paraeruginosa (strain DSM 24068 / PA7) (Pseudomonas aeruginosa (strain PA7)).